A 409-amino-acid polypeptide reads, in one-letter code: NADH-quinone oxidoreductase subunit D (409 aa).

Belongs to the complex I 49 kDa subunit family. NDH-1 is composed of 14 different subunits. Subunits NuoB, C, D, E, F, and G constitute the peripheral sector of the complex.

It localises to the cell inner membrane. It catalyses the reaction a quinone + NADH + 5 H(+)(in) = a quinol + NAD(+) + 4 H(+)(out). Its function is as follows. NDH-1 shuttles electrons from NADH, via FMN and iron-sulfur (Fe-S) centers, to quinones in the respiratory chain. The immediate electron acceptor for the enzyme in this species is believed to be ubiquinone. Couples the redox reaction to proton translocation (for every two electrons transferred, four hydrogen ions are translocated across the cytoplasmic membrane), and thus conserves the redox energy in a proton gradient. The polypeptide is NADH-quinone oxidoreductase subunit D (Helicobacter pylori (strain G27)).